Consider the following 3901-residue polypeptide: Nonribosomal peptide synthetase opaA (3901 aa).

Residues 248-641 (HNAQHHPSVV…HRKDNQIKIR (394 aa)) form an adenylation 1 region. In terms of domain architecture, Carrier 1 spans 780–854 (LPVTANEIVV…DMATRLTRIK (75 aa)). S815 bears the O-(pantetheine 4'-phosphoryl)serine mark. Residues 891 to 1164 (DAYPCSALQE…IATVPIRINL (274 aa)) form a condensation 1 region. Residues 1328–1725 (QSHAQKTPKS…GRIGNQVKLR (398 aa)) are adenylation 2. In terms of domain architecture, Carrier 2 spans 1858-1936 (RTPLDTERDL…QIAAQAATRA (79 aa)). S1895 is modified (O-(pantetheine 4'-phosphoryl)serine). The epimerase stretch occupies residues 1953–2261 (KLTPIQQLFF…KDARRRLTRN (309 aa)). The interval 2403-2826 (ENLYPCAPIQ…LVSTDHKRLL (424 aa)) is condensation 2. The tract at residues 2846–3243 (QQHVRETPDA…GRKDSQIKIR (398 aa)) is adenylation 3. The Carrier 3 domain occupies 3375–3451 (LPSTAGEQLL…ALAARSRSKD (77 aa)). O-(pantetheine 4'-phosphoryl)serine is present on S3412. The interval 3509–3837 (HHFSFAVEGK…EDLKTHFTLN (329 aa)) is condensation 3.

The protein belongs to the NRP synthetase family.

In terms of biological role, nonribosomal peptide synthetase; part of the gene cluster that mediates the biosynthesis of oxepinamides, derivatives of anthranilyl-containing tripeptides that share an oxepin ring and a fused pyrimidinone moiety. The nonribosomal peptide synthetase (NRPS) opaA assembles the quinazolinone core with D-Phe incorporation. The first adenylation domain (A1) of opaA loads and activates anthranilic acid whereas the second A domain (A2) is for activating of L-Phe, which is then converted to D-form by the E domain. The third A domain (A3) is responsible for L-Ile activation and the terminal condensation domain C3 for cyclization and releasing the NRPS product protuboxepin K. The cytochrome P450 monooxygenase opaB then catalyzes alone the oxepin ring formation to convert protuboxepin K into protuboxepin A. The flavoenzyme opaC installs subsequently one hydroxyl group at the oxepin ring, accompanied by double bond migration, to form 15-epi-oxepinamide E. The epimerase opaE changes the D-Phe residue back to L-form, leading to oxepinamide E, which is further methylated at the hydroxyl group at C-12 by the O-methyltransferase OpaF to yield oxepinamide F. In Aspergillus ustus, this protein is Nonribosomal peptide synthetase opaA.